We begin with the raw amino-acid sequence, 152 residues long: Sec-independent protein translocase protein TatB (152 aa).

Residues 1-21 form a helical membrane-spanning segment; sequence MLDVGFGELFCFGIIALLVLG.

This sequence belongs to the TatB family. In terms of assembly, the Tat system comprises two distinct complexes: a TatABC complex, containing multiple copies of TatA, TatB and TatC subunits, and a separate TatA complex, containing only TatA subunits. Substrates initially bind to the TatABC complex, which probably triggers association of the separate TatA complex to form the active translocon.

It localises to the cell inner membrane. Functionally, part of the twin-arginine translocation (Tat) system that transports large folded proteins containing a characteristic twin-arginine motif in their signal peptide across membranes. Together with TatC, TatB is part of a receptor directly interacting with Tat signal peptides. TatB may form an oligomeric binding site that transiently accommodates folded Tat precursor proteins before their translocation. This chain is Sec-independent protein translocase protein TatB, found in Acinetobacter baylyi (strain ATCC 33305 / BD413 / ADP1).